A 365-amino-acid polypeptide reads, in one-letter code: Eukaryotic translation initiation factor 3 subunit H (365 aa).

Residues 11 to 160 (VQVEALVVMK…LRAFRLSPQF (150 aa)) form the MPN domain. Residues 273 to 303 (YQRSLAREQTKIAAWQAKRKAENATRAQLKQ) adopt a coiled-coil conformation.

This sequence belongs to the eIF-3 subunit H family. Component of the eukaryotic translation initiation factor 3 (eIF-3) complex.

The protein localises to the cytoplasm. Its function is as follows. Component of the eukaryotic translation initiation factor 3 (eIF-3) complex, which is involved in protein synthesis of a specialized repertoire of mRNAs and, together with other initiation factors, stimulates binding of mRNA and methionyl-tRNAi to the 40S ribosome. The eIF-3 complex specifically targets and initiates translation of a subset of mRNAs involved in cell proliferation. The protein is Eukaryotic translation initiation factor 3 subunit H of Coccidioides immitis (strain RS) (Valley fever fungus).